The sequence spans 143 residues: Hemoglobin subunit alpha (143 aa).

S2 is subject to N-acetylserine. Residues 2 to 143 (SLSDKDKAAV…VALALAEKYR (142 aa)) enclose the Globin domain. H60 contributes to the O2 binding site. H89 provides a ligand contact to heme b.

It belongs to the globin family. In terms of assembly, heterotetramer of two alpha chains and two beta chains. As to expression, red blood cells.

Functionally, involved in oxygen transport from the lung to the various peripheral tissues. This chain is Hemoglobin subunit alpha (hba), found in Artedidraco orianae (Barbeled plunderfish).